The following is a 727-amino-acid chain: Ubiquitin carboxyl-terminal hydrolase BAP1 (727 aa).

Residues 4–235 (GWLELESDPG…IRFNLMAVVP (232 aa)) enclose the UCH catalytic domain. Residues 56–60 (RRSRR) carry the Arg-finger motif motif. The active-site Nucleophile is the C91. The active-site Proton donor is H169. The tract at residues 273–351 (THKSQESQLP…SLNGVPPTPT (79 aa)) is disordered. S292 is modified (phosphoserine). The segment covering 320-330 (CPQTTTHSPPS) has biased composition (polar residues). Residues 363 to 366 (NHNY) carry the HBM-like motif motif. S369 and S394 each carry phosphoserine. 2 disordered regions span residues 372 to 435 (QEEE…DGQL) and 462 to 522 (SIKT…SPVT). Acidic residues predominate over residues 394–407 (SDDEEDYEDEEEDV). Composition is skewed to polar residues over residues 426-435 (SLSNSSDGQL) and 478-522 (THSQ…SPVT). The residue at position 491 (T491) is a Phosphothreonine. Residues S519, S535, S583, and S595 each carry the phosphoserine modification. The tract at residues 573-622 (LTEGGKGSSPSTRSSQGSQGSSSLEEKEVVEVTDSRDKSGLNRSSEPLSG) is disordered. The span at 580–595 (SSPSTRSSQGSQGSSS) shows a compositional bias: low complexity. Residues 594–719 (SSLEEKEVVE…QRKPDRRKRS (126 aa)) form an interaction with BRCA1 region. The span at 596 to 612 (LEEKEVVEVTDSRDKSG) shows a compositional bias: basic and acidic residues. A coiled-coil region spans residues 628–659 (KELLALLKCVEAEIANYEACLKEEVEKRKKFK). Residues 640–684 (EIANYEACLKEEVEKRKKFKIDDQRRTHNYDEFICTFISMLAQEG) are interaction with YY1. Residues 668–696 (NYDEFICTFISMLAQEGMLANLVEQNISV) form the ULD domain. The segment at 697–699 (RRR) is interaction with nucleosomal DNA forming a DNA clamp with ASXL1. The short motif at 697-720 (RRRQGVSIGRLHKQRKPDRRKRSR) is the Classical bipartite Nuclear localization signal (NLS) element. Residues 702–727 (VSIGRLHKQRKPDRRKRSRPYKAKRQ) form a disordered region. Residues 711 to 727 (RKPDRRKRSRPYKAKRQ) form a positively charged C-terminal extension (CTE) region. The Nuclear localization signal signature appears at 715 to 720 (RRKRSR). The Non-classical PY-nuclear localization signal (PY-NLS) signature appears at 715 to 722 (RRKRSRPY).

This sequence belongs to the peptidase C12 family. BAP1 subfamily. Core component of the polycomb repressive deubiquitinase (PR-DUB) complex, at least composed of BAP1, one of ASXL1, ASXL2 or (probably) ASXL3, and one of MBD5 or MBD6. The PR-DUB core associates with a number of accessory proteins, including FOXK1, FOXK2, KDM1B, HCFC1, YY1 and OGT; KDM1B specifically associates with ASXL2 PR-DUB complexes. The BAP1 deubiquitinase activity is not required for PR-DUB assembly. Homodimerize (via coiled-coil hinge-region between the UCH and ULD domains) to mediate assembly of 2 copies of the BAP1-ASXL heterodimer into a bisymmetric tetramer; dimerization enhances association with nucleosomes. The PR-DUB complex associates with nucleosomes to mediate deubiquitination of 'lys-120' of histone H2AK118ub1 substrates; the association requires the positively charged C-terminal tail of BAP1. Interacts (via ULD domain) with ASXL1 (via DEUBAD domain); the interaction is direct and forms a ubiquitin binding cleft. The interaction with ASXL1 stabilizes BAP1 but is not required for nucleosome binding. Associates (via C-terminus) with nucleosome and chromatosome complexes through direct interaction with DNA and the histone3/4 dimer; this association displaces the histone-2A C-terminal tail, extending and orienting the H2AK118ub1 substrate towards the BAP1 deubiquitinase active site. Also interacts (via arginine finger) directly with the histone H2A-H2B acidic patch; this interaction is not critical for nucleosome-chromatosome association but may play a role in orienting the H2AK118ub1 substrate towards the PR-DUB complex active site. Interacts with BRCA1 (via the RING finger). Interacts (via HBM-like motif) with HCFC1. Interacts (via a C-terminal region overlapping the ULD domain) with YY1; the interaction is direct and requires the interaction with HCFC1. Interacts (when phosphorylated at Thr-491) with FOXK1. Interacts (when phosphorylated at Thr-491) with FOXK2; leading to recruitment of the PR-DUB complex and repression of FOXK2 target genes. Interacts (via non-classical PY-NLS) with TNPO1/transportin-1 (via HEAT repeats 8-12); the interaction is direct, mediates BAP1 nuclear localization and disrupts BAP1 homodimerization. Interacts (via C-terminus) with KPNA1/importin alpha5 and KPNA2/importin alpha1; these interactions can contribute to BAP1 nuclear localization but are less important than the interaction with TNPO1/transportin-1. The interaction with TNPO1/transportin-1 disrupts homodimerization and blocks ubiquitination by UBE2O. Post-translationally, ubiquitinated: monoubiquitinated at multiple sites within its nuclear localization signal (NLS) BY UBE2O, leading to cytoplasmic retention. Able to mediate autodeubiquitination via intramolecular interactions to counteract cytoplasmic retention. Monoubiquitinated on at least 4 sites near or within its PY-NLS.

It is found in the cytoplasm. The protein resides in the nucleus. It localises to the chromosome. The enzyme catalyses Thiol-dependent hydrolysis of ester, thioester, amide, peptide and isopeptide bonds formed by the C-terminal Gly of ubiquitin (a 76-residue protein attached to proteins as an intracellular targeting signal).. Deubiquitinating enzyme that plays a key role in chromatin by mediating deubiquitination of histone H2A and HCFC1. Catalytic component of the polycomb repressive deubiquitinase (PR-DUB) complex, a complex that specifically mediates deubiquitination of histone H2A monoubiquitinated at 'Lys-120' (H2AK119ub1). Does not deubiquitinate monoubiquitinated histone H2B. The PR-DUB complex is an epigenetic regulator of gene expression and acts as a transcriptional coactivator, affecting genes involved in development, cell communication, signaling, cell proliferation and cell viability. Antagonizes PRC1 mediated H2AK119ub1 monoubiquitination. As part of the PR-DUB complex, associates with chromatin enriched in histone marks H3K4me1, H3K4me3, and H3K27Ac, but not in H3K27me3. Acts as a regulator of cell growth by mediating deubiquitination of HCFC1 N-terminal and C-terminal chains, with some specificity toward 'Lys-48'-linked polyubiquitin chains compared to 'Lys-63'-linked polyubiquitin chains. Deubiquitination of HCFC1 does not lead to increase stability of HCFC1. Interferes with the BRCA1 and BARD1 heterodimer activity by inhibiting their ability to mediate ubiquitination and autoubiquitination. It however does not mediate deubiquitination of BRCA1 and BARD1. Able to mediate autodeubiquitination via intramolecular interactions to counteract monoubiquitination at the nuclear localization signal (NLS), thereby protecting it from cytoplasmic sequestration. Acts as a tumor suppressor. Negatively regulates epithelial-mesenchymal transition (EMT) of trophoblast stem cells during placental development by regulating genes involved in epithelial cell integrity, cell adhesion and cytoskeletal organization. The protein is Ubiquitin carboxyl-terminal hydrolase BAP1 (Bap1) of Rattus norvegicus (Rat).